The chain runs to 265 residues: HUWE1-associated protein modifying stress responses (265 aa).

Disordered regions lie at residues 1 to 22 (MEEK…HWFS), 140 to 173 (GKAP…SVET), and 194 to 219 (ISMR…RRNG). Positions 147-172 (SSRAPPRLAMVSPSRSTPSETSSSVE) are enriched in low complexity.

It belongs to the HAPSTR1 family. Oligomer.

It localises to the nucleus. It is found in the cytoplasm. Acts as a central player within a network of stress response pathways promoting cellular adaptability. Functions as a negative regulator of TP53/P53 in the cellular response to telomere erosion and probably also DNA damage. The polypeptide is HUWE1-associated protein modifying stress responses (Danio rerio (Zebrafish)).